A 238-amino-acid chain; its full sequence is MKELDLDAGNSGLKWRLVESGRVIDRGIIIYGANAQKWSMPTKGACRAFVSSVSSKEVDDAIREVLKDIKDVFWAKTASSYGSLVNAYADYASLGVDRWLALIAAYSKYPEDLCVIDCGTAVTVDYVDKFGVHKGGYIAPGGALMLKSLNVNTAALKGTYGYDSELIPGSSTRECIERGVYYMQKAFVLSVARRCAESRIVCTGGGVKALLGNDEAYTYVEDLVLDGLRIVANAVPVN.

7 to 14 (DAGNSGLK) is an ATP binding site. Residues Y88 and 95-98 (GVDR) each bind substrate. The active-site Proton acceptor is D97. Residue D117 participates in K(+) binding. Residue T120 coordinates ATP. Substrate is bound at residue T172.

The protein belongs to the type III pantothenate kinase family. As to quaternary structure, homodimer. NH4(+) is required as a cofactor. K(+) serves as cofactor.

The protein localises to the cytoplasm. It carries out the reaction (R)-pantothenate + ATP = (R)-4'-phosphopantothenate + ADP + H(+). It functions in the pathway cofactor biosynthesis; coenzyme A biosynthesis; CoA from (R)-pantothenate: step 1/5. Catalyzes the phosphorylation of pantothenate (Pan), the first step in CoA biosynthesis. The protein is Type III pantothenate kinase of Hahella chejuensis (strain KCTC 2396).